Here is an 80-residue protein sequence, read N- to C-terminus: Large ribosomal subunit protein uL30 (80 aa).

The protein belongs to the universal ribosomal protein uL30 family. In terms of assembly, part of the 50S ribosomal subunit.

This is Large ribosomal subunit protein uL30 from Vesicomyosocius okutanii subsp. Calyptogena okutanii (strain HA).